Reading from the N-terminus, the 238-residue chain is MSSPDQNPSDAAGQTGSSNEEVVDVRRGMFGVKGSGDTSGYGRLVREIVLPGSSPRPYGFYFDEIADRLAEALNRDGVEFEDAIEKVVVYRNELTLHVRREALLRVAQSLRDEPELRFELCLGVNGVHYPHETGRELHAVYPLQSITHNRRLRLEVSAPDSDPHIPSLYAVYPTNDWHERETYDFFGIIFDGHPSLTRIEMPDDWQGHPQRKDYPLGGIPVEYKGAQIPPPDERRGYN.

The interval 1-20 (MSSPDQNPSDAAGQTGSSNE) is disordered.

The protein belongs to the complex I 30 kDa subunit family. NDH-1 is composed of 14 different subunits. Subunits NuoB, C, D, E, F, and G constitute the peripheral sector of the complex.

Its subcellular location is the cell membrane. It catalyses the reaction a quinone + NADH + 5 H(+)(in) = a quinol + NAD(+) + 4 H(+)(out). Functionally, NDH-1 shuttles electrons from NADH, via FMN and iron-sulfur (Fe-S) centers, to quinones in the respiratory chain. The immediate electron acceptor for the enzyme in this species is believed to be a menaquinone. Couples the redox reaction to proton translocation (for every two electrons transferred, four hydrogen ions are translocated across the cytoplasmic membrane), and thus conserves the redox energy in a proton gradient. The polypeptide is NADH-quinone oxidoreductase subunit C (Mycobacterium ulcerans (strain Agy99)).